The sequence spans 807 residues: Spondin-1 (807 aa).

The first 28 residues, 1 to 28 (MRLSPAPLKLSRTPALLALALPLAAALA), serve as a signal peptide directing secretion. One can recognise a Reelin domain in the interval 29–194 (FSDETLDKVP…DSTFDGVTDK (166 aa)). Cystine bridges form between Cys44–Cys128, Cys156–Cys182, Cys199–Cys336, Cys200–Cys340, Cys202–Cys415, Cys443–Cys480, Cys454–Cys489, Cys459–Cys494, Cys502–Cys538, Cys513–Cys517, Cys548–Cys554, Cys559–Cys595, Cys570–Cys574, Cys605–Cys610, Cys615–Cys650, Cys626–Cys630, and Cys660–Cys665. The region spanning 195-388 (PILDCCACGT…LTSLDHPQSP (194 aa)) is the Spondin domain. Asn214 carries N-linked (GlcNAc...) asparagine glycosylation. Residues Asp325, Asp354, and Asp358 each contribute to the Ca(2+) site. TSP type-1 domains are found at residues 442 to 495 (TCIY…PGCS), 501 to 555 (TCTM…EECS), 558 to 611 (SCLM…PECH), 614 to 666 (PCLL…PECP), 668 to 721 (DCEL…RKCL), and 754 to 806 (GCRM…NVHP). C-linked (Man) tryptophan glycosylation occurs at Trp448. Residue Trp451 is glycosylated (C-linked (Man) tryptophan; partial). A C-linked (Man) tryptophan glycan is attached at Trp507. C-linked (Man) tryptophan; partial glycosylation is present at Trp510. Trp564 is a glycosylation site (C-linked (Man) tryptophan). Residue Trp620 is glycosylated (C-linked (Man) tryptophan; partial). Trp623 carries C-linked (Man) tryptophan glycosylation. C-linked (Man) tryptophan glycosylation is present at Trp674. N-linked (GlcNAc...) asparagine glycosylation occurs at Asn681.

Binds to the central extracellular domain of APP and inhibits beta-secretase cleavage of APP. Highest expression in lung, lower expression in brain, heart, kidney, liver and testis, and lowest expression in pancreas, skeletal muscle and ovary. Not expressed in spleen.

It is found in the secreted. It localises to the extracellular space. Its subcellular location is the extracellular matrix. Its function is as follows. Cell adhesion protein that promotes the attachment of spinal cord and sensory neuron cells and the outgrowth of neurites in vitro. May contribute to the growth and guidance of axons in both the spinal cord and the PNS. Major factor for vascular smooth muscle cell. The protein is Spondin-1 (SPON1) of Homo sapiens (Human).